The chain runs to 722 residues: Polyribonucleotide nucleotidyltransferase (722 aa).

Mg(2+) contacts are provided by Asp-505 and Asp-511. A KH domain is found at 572 to 631 (PSITTIKIHPDKIRDVIGKGGATIRGICDETGASIDLDDDGNVKIYADNAAAAQAAVNRV). The region spanning 641 to 709 (GAIYKGRVER…NRGRVKLSMK (69 aa)) is the S1 motif domain.

This sequence belongs to the polyribonucleotide nucleotidyltransferase family. As to quaternary structure, component of the RNA degradosome, which is a multiprotein complex involved in RNA processing and mRNA degradation. It depends on Mg(2+) as a cofactor.

It is found in the cytoplasm. The catalysed reaction is RNA(n+1) + phosphate = RNA(n) + a ribonucleoside 5'-diphosphate. In terms of biological role, involved in mRNA degradation. Catalyzes the phosphorolysis of single-stranded polyribonucleotides processively in the 3'- to 5'-direction. The polypeptide is Polyribonucleotide nucleotidyltransferase (Marinobacter nauticus (strain ATCC 700491 / DSM 11845 / VT8) (Marinobacter aquaeolei)).